A 752-amino-acid polypeptide reads, in one-letter code: MFSGKQTKPTFKSYLPPLQTDLKKSPQLPIKKLEAKLLPGEIVVNEANFVRKCIGADSGQDDLWGKLVCTNFKVSFISHNSLPQQRFQCTHRLLGEHDIPLACVEQVVTVNDVKGKQKILGSNQKLKFNPTELILYCKDFRIIRFRFDEAGPESAKKVCLAIAHYSHPADPQLLFGFEYVGKRYHGSAGERVNGVDPGGGLQTPLFDCSSDWDREIKRTGASEWRVCTINQGYFISPSLPEFFVVPVSLADQDLKQYACCFYSQRIPLWCWNHPSGSALVRMSNISDPQQQRKVEQRISSAITKSHPLRSDVFKSDLDKNLPNIQDIQAALLKLRQICVIESFEESEEKWLSSLESSRWMEYVRTFLRHAVEVVYMLESRHVSVILLEKEDRDLSCVISSLVQLMCDPHCRSLHGFQALIQKEWVMAGHRFLDRCNHLKKSDKEELWNQYPAAFEFTEVYLTVLGDSMWVPVFSTFLFNCPRQRAEHSRDFASSKSIHLGQDQALRFPPVWDWSQQFSLKDQTLFNNPLYVGKIATCLQNGTVKTFTHRRSKKNYSSTVRGLPSLMRNGSLGPNDTLTRRNSLVLRLRSDLSQVREQPETPSERFVRDFFSRAVDLQGLLLPQLLPSHLSVWKLYFLRWVPEAQIPHGGPVTAFHKLSVLTDEIEMLQNQLRQYKGAAGTANTSHAEHSKMYFKATSTPQQCPAPPGYLSSSFPFSPVGNLCRPGILGTPLSKFLNGAKIWLSTETLANETI.

The Myotubularin phosphatase domain maps to 206–636 (FDCSSDWDRE…SHLSVWKLYF (431 aa)). Residues 652–683 (TAFHKLSVLTDEIEMLQNQLRQYKGAAGTANT) adopt a coiled-coil conformation.

This sequence belongs to the protein-tyrosine phosphatase family. Non-receptor class myotubularin subfamily.

This chain is Myotubularin-related protein 10 (mtmr10), found in Danio rerio (Zebrafish).